Consider the following 427-residue polypeptide: 5'-deoxyadenosine deaminase (427 aa).

Residues histidine 62 and histidine 64 each coordinate Zn(2+). Glutamate 91 and histidine 183 together coordinate substrate. Histidine 210 provides a ligand contact to Zn(2+). Substrate contacts are provided by glutamate 213 and aspartate 298. Aspartate 298 contacts Zn(2+).

It belongs to the metallo-dependent hydrolases superfamily. MTA/SAH deaminase family. In terms of assembly, homotetramer. It depends on Zn(2+) as a cofactor.

It carries out the reaction 5'-deoxyadenosine + H2O + H(+) = 5'-deoxyinosine + NH4(+). It catalyses the reaction S-adenosyl-L-homocysteine + H2O + H(+) = S-inosyl-L-homocysteine + NH4(+). The catalysed reaction is S-methyl-5'-thioadenosine + H2O + H(+) = S-methyl-5'-thioinosine + NH4(+). The enzyme catalyses adenosine + H2O + H(+) = inosine + NH4(+). It functions in the pathway amino-acid biosynthesis; S-adenosyl-L-methionine biosynthesis. Its function is as follows. Catalyzes the deamination of three SAM-derived enzymatic products, namely 5'-deoxyadenosine, S-adenosyl-L-homocysteine, and 5'-methylthioadenosine, to produce the inosine analogs. Can also deaminate adenosine. The preferred substrate for this enzyme is 5'-deoxyadenosine, but all these substrates are efficiently deaminated. Likely functions in a S-adenosyl-L-methionine (SAM) recycling pathway from S-adenosyl-L-homocysteine (SAH) produced from SAM-dependent methylation reactions. May also be involved in the recycling of 5'-deoxyadenosine, whereupon the 5'-deoxyribose moiety of 5'-deoxyinosine is further metabolized to deoxyhexoses used for the biosynthesis of aromatic amino acids in methanogens. The chain is 5'-deoxyadenosine deaminase from Methanothermobacter thermautotrophicus (strain ATCC 29096 / DSM 1053 / JCM 10044 / NBRC 100330 / Delta H) (Methanobacterium thermoautotrophicum).